Here is a 235-residue protein sequence, read N- to C-terminus: Large ribosomal subunit protein uL1 (235 aa).

Belongs to the universal ribosomal protein uL1 family. Part of the 50S ribosomal subunit.

In terms of biological role, binds directly to 23S rRNA. The L1 stalk is quite mobile in the ribosome, and is involved in E site tRNA release. Protein L1 is also a translational repressor protein, it controls the translation of the L11 operon by binding to its mRNA. In Blochmanniella floridana, this protein is Large ribosomal subunit protein uL1.